Reading from the N-terminus, the 101-residue chain is Phosphoribosyl-AMP cyclohydrolase (101 aa).

D71 contributes to the Mg(2+) binding site. Zn(2+) is bound at residue C72. The Mg(2+) site is built by D73 and D75. Residues C88 and C95 each coordinate Zn(2+).

This sequence belongs to the PRA-CH family. Homodimer. Mg(2+) is required as a cofactor. Zn(2+) serves as cofactor.

The protein resides in the cytoplasm. The enzyme catalyses 1-(5-phospho-beta-D-ribosyl)-5'-AMP + H2O = 1-(5-phospho-beta-D-ribosyl)-5-[(5-phospho-beta-D-ribosylamino)methylideneamino]imidazole-4-carboxamide. The protein operates within amino-acid biosynthesis; L-histidine biosynthesis; L-histidine from 5-phospho-alpha-D-ribose 1-diphosphate: step 3/9. Catalyzes the hydrolysis of the adenine ring of phosphoribosyl-AMP. This Bacillus cereus (strain ATCC 10987 / NRS 248) protein is Phosphoribosyl-AMP cyclohydrolase.